We begin with the raw amino-acid sequence, 168 residues long: Transcriptional regulator MraZ (168 aa).

SpoVT-AbrB domains are found at residues 8-51 (EYNQ…GGDR) and 90-140 (ALNM…KADI).

Belongs to the MraZ family. In terms of assembly, forms oligomers.

The protein resides in the cytoplasm. It localises to the nucleoid. This Cereibacter sphaeroides (strain KD131 / KCTC 12085) (Rhodobacter sphaeroides) protein is Transcriptional regulator MraZ.